Here is a 466-residue protein sequence, read N- to C-terminus: Phosphomethylpyrimidine synthase (466 aa).

Residues N80, M109, Y139, H175, 195 to 197, 236 to 239, and E275 each bind substrate; these read SRG and DSLR. Position 279 (H279) interacts with Zn(2+). Y302 lines the substrate pocket. H343 serves as a coordination point for Zn(2+). 3 residues coordinate [4Fe-4S] cluster: C423, C426, and C431.

It belongs to the ThiC family. [4Fe-4S] cluster is required as a cofactor.

It catalyses the reaction 5-amino-1-(5-phospho-beta-D-ribosyl)imidazole + S-adenosyl-L-methionine = 4-amino-2-methyl-5-(phosphooxymethyl)pyrimidine + CO + 5'-deoxyadenosine + formate + L-methionine + 3 H(+). Its pathway is cofactor biosynthesis; thiamine diphosphate biosynthesis. Catalyzes the synthesis of the hydroxymethylpyrimidine phosphate (HMP-P) moiety of thiamine from aminoimidazole ribotide (AIR) in a radical S-adenosyl-L-methionine (SAM)-dependent reaction. The polypeptide is Phosphomethylpyrimidine synthase (Synechococcus sp. (strain CC9902)).